Here is a 258-residue protein sequence, read N- to C-terminus: GTP cyclohydrolase FolE2 (258 aa).

It belongs to the GTP cyclohydrolase IV family.

It carries out the reaction GTP + H2O = 7,8-dihydroneopterin 3'-triphosphate + formate + H(+). It functions in the pathway cofactor biosynthesis; 7,8-dihydroneopterin triphosphate biosynthesis; 7,8-dihydroneopterin triphosphate from GTP: step 1/1. In terms of biological role, converts GTP to 7,8-dihydroneopterin triphosphate. This is GTP cyclohydrolase FolE2 from Pseudothermotoga lettingae (strain ATCC BAA-301 / DSM 14385 / NBRC 107922 / TMO) (Thermotoga lettingae).